A 301-amino-acid polypeptide reads, in one-letter code: tRNA U34 carboxymethyltransferase (301 aa).

Carboxy-S-adenosyl-L-methionine contacts are provided by residues Lys-70, Trp-84, Lys-89, Gly-108, 130-132 (DPS), 157-158 (VE), Tyr-177, and Arg-292.

Belongs to the class I-like SAM-binding methyltransferase superfamily. CmoB family. As to quaternary structure, homotetramer.

It catalyses the reaction carboxy-S-adenosyl-L-methionine + 5-hydroxyuridine(34) in tRNA = 5-carboxymethoxyuridine(34) in tRNA + S-adenosyl-L-homocysteine + H(+). Catalyzes carboxymethyl transfer from carboxy-S-adenosyl-L-methionine (Cx-SAM) to 5-hydroxyuridine (ho5U) to form 5-carboxymethoxyuridine (cmo5U) at position 34 in tRNAs. The chain is tRNA U34 carboxymethyltransferase from Sulfurovum sp. (strain NBC37-1).